The chain runs to 359 residues: Protein RecA (359 aa).

ATP is bound at residue 73 to 80; the sequence is GPESSGKT.

Belongs to the RecA family.

It localises to the cytoplasm. In terms of biological role, can catalyze the hydrolysis of ATP in the presence of single-stranded DNA, the ATP-dependent uptake of single-stranded DNA by duplex DNA, and the ATP-dependent hybridization of homologous single-stranded DNAs. It interacts with LexA causing its activation and leading to its autocatalytic cleavage. The protein is Protein RecA of Desulfovibrio desulfuricans (strain ATCC 27774 / DSM 6949 / MB).